Consider the following 509-residue polypeptide: Dol-P-Glc:Glc(2)Man(9)GlcNAc(2)-PP-Dol alpha-1,2-glucosyltransferase (509 aa).

Residues 1–4 (MGKL) are Cytoplasmic-facing. The chain crosses the membrane as a helical span at residues 5 to 25 (AVAAITSLWVIPMSIIVNHIV). At 26-57 (PEPYMDEIFHVPQAQQYCNGNFRSWDPMITTP) the chain is on the lumenal side. A helical membrane pass occupies residues 58 to 78 (PGLYYLSLAHVASLFPGMLLM). Topologically, residues 79 to 99 (ENTSQSFSEACSTSVLRSTNA) are cytoplasmic. The chain crosses the membrane as a helical span at residues 100–120 (VSAVLCGVLVYEIIRFLGPNL). The Lumenal segment spans residues 121-124 (SDRK). The chain crosses the membrane as a helical span at residues 125–145 (ATFMALVMSLYPLHWFFTFLY). The Cytoplasmic portion of the chain corresponds to 146–170 (YTDVASLTAVLAMYLTCLKRRYVLS). Residues 171 to 191 (ALFGTLAVFIRQTNVVWMLFV) traverse the membrane as a helical segment. Topologically, residues 192–285 (ACSGILDFTL…KWRILIKFSP (94 aa)) are lumenal. Residues 210–254 (QEVNQELHQSSNKKGATLRSNLRKRKSDISSDTSDPFNHGQTVPS) form a disordered region. Polar residues-rich tracts occupy residues 215-229 (ELHQ…TLRS) and 239-254 (SSDT…TVPS). A helical transmembrane segment spans residues 286 to 306 (FIFVVVAFGIFILWNGGIVLG). Over 307-311 (AKEAH) the chain is Cytoplasmic. Residues 312 to 332 (VVSLHFAQIMYFSLVSALFTA) form a helical membrane-spanning segment. Residues 333–355 (PLHFSVNQLRHQFHQLHRNWSLS) lie on the Lumenal side of the membrane. Asn351 carries an N-linked (GlcNAc...) asparagine glycan. A helical transmembrane segment spans residues 356–376 (LILTLVALVAGFVSVHFFSLA). Topologically, residues 377–400 (HPYLLADNRHYPFYLWRKIINAHW) are cytoplasmic. Residues 401 to 421 (LMKYILVPVYVYSWFSILTLL) form a helical membrane-spanning segment. The Lumenal portion of the chain corresponds to 422–428 (AKTRRQT). The helical transmembrane segment at 429 to 449 (WILVYFLATCGVLVPTPLIEF) threads the bilayer. Topologically, residues 450–472 (RYYTIPFYLFMLHSCVRSSSFAT) are cytoplasmic. A helical membrane pass occupies residues 473–493 (WLLIGTIFVSINVFTMAMFLF). Residues 494 to 509 (RPFKWSHEDGVQRFIW) are Lumenal-facing.

It belongs to the ALG10 glucosyltransferase family.

Its subcellular location is the endoplasmic reticulum membrane. It catalyses the reaction an alpha-D-Glc-(1-&gt;3)-alpha-D-Glc-(1-&gt;3)-alpha-D-Man-(1-&gt;2)-alpha-D-Man-(1-&gt;2)-alpha-D-Man-(1-&gt;3)-[alpha-D-Man-(1-&gt;2)-alpha-D-Man-(1-&gt;3)-[alpha-D-Man-(1-&gt;2)-alpha-D-Man-(1-&gt;6)]-alpha-D-Man-(1-&gt;6)]-beta-D-Man-(1-&gt;4)-beta-D-GlcNAc-(1-&gt;4)-alpha-D-GlcNAc-diphospho-di-trans,poly-cis-dolichol + a di-trans,poly-cis-dolichyl beta-D-glucosyl phosphate = a alpha-D-Glc-(1-&gt;2)-alpha-D-Glc-(1-&gt;3)-alpha-D-Glc-(1-&gt;3)-alpha-D-Man-(1-&gt;2)-alpha-D-Man-(1-&gt;2)-alpha-D-Man-(1-&gt;3)-[alpha-D-Man-(1-&gt;2)-alpha-D-Man-(1-&gt;3)-[alpha-D-Man-(1-&gt;2)-alpha-D-Man-(1-&gt;6)]-alpha-D-Man-(1-&gt;6)]-beta-D-Man-(1-&gt;4)-beta-D-GlcNAc-(1-&gt;4)-alpha-D-GlcNAc-diphospho-di-trans,poly-cis-dolichol + a di-trans,poly-cis-dolichyl phosphate + H(+). It functions in the pathway protein modification; protein glycosylation. In terms of biological role, dol-P-Glc:Glc(2)Man(9)GlcNAc(2)-PP-Dol alpha-1,2-glucosyltransferase that operates in the biosynthetic pathway of dolichol-linked oligosaccharides, the glycan precursors employed in protein asparagine (N)-glycosylation. The assembly of dolichol-linked oligosaccharides begins on the cytosolic side of the endoplasmic reticulum membrane and finishes in its lumen. The sequential addition of sugars to dolichol pyrophosphate produces dolichol-linked oligosaccharides containing fourteen sugars, including two GlcNAcs, nine mannoses and three glucoses. Once assembled, the oligosaccharide is transferred from the lipid to nascent proteins by oligosaccharyltransferases. In the lumen of the endoplasmic reticulum, adds the third and last glucose residue from dolichyl phosphate glucose (Dol-P-Glc) onto the lipid-linked oligosaccharide intermediate Glc(2)Man(9)GlcNAc(2)-PP-Dol to produce Glc(3)Man(9)GlcNAc(2)-PP-Dol. The protein is Dol-P-Glc:Glc(2)Man(9)GlcNAc(2)-PP-Dol alpha-1,2-glucosyltransferase of Arabidopsis thaliana (Mouse-ear cress).